The primary structure comprises 356 residues: Thrombomodulin (356 aa).

Residues 1 to 296 lie on the Extracellular side of the membrane; the sequence is RGARGETEGR…SPAPAGPLHS (296 aa). 2 EGF-like domains span residues 17–57 and 60–98; these read GAWA…RSCG and AEHP…HRCE. Cystine bridges form between Cys-21–Cys-32, Cys-28–Cys-41, Cys-43–Cys-56, Cys-64–Cys-72, Cys-68–Cys-82, Cys-84–Cys-97, Cys-103–Cys-114, Cys-110–Cys-123, Cys-125–Cys-136, Cys-143–Cys-152, Cys-148–Cys-162, Cys-164–Cys-178, Cys-182–Cys-191, Cys-187–Cys-199, Cys-201–Cys-213, Cys-219–Cys-228, Cys-224–Cys-237, and Cys-239–Cys-253. An EGF-like 3; calcium-binding domain is found at 99–137; it reads DVDDCAQLPSPCPQRCVNTEGGFQCHCDTGYELVDGECV. EGF-like domains lie at 139 to 179 and 178 to 214; these read PVDP…HKCQ and CQMF…STCT. The 40-residue stretch at 215 to 254 folds into the EGF-like 6; calcium-binding domain; sequence DINECDTNICPGQCHNLPGTYECICGPDSALSGQIGIDCD. The disordered stretch occupies residues 255 to 290; that stretch reads PTQVNEERGTPEDYGGSGEPPVSPTPGATARPSPAP. Ser-271 is a glycosylation site (O-linked (Xyl...) (chondroitin sulfate) serine). The chain crosses the membrane as a helical span at residues 297–320; that stretch reads GVLVGISIASLSLVVALLALLCHL. Residues 321–356 lie on the Cytoplasmic side of the membrane; it reads RKKQGASRGELEYKCGVPAKELMLQQVKTERTPQKL.

As to quaternary structure, interacts with ITGAL, ITGAM and ITGB2. Interacts with thrombin/F2; this interaction switches the specificity of thrombin from a procoagulant to an anticoagulant and antifibrinolytic protease. Interacts with ANGP1 and ANGP2; these interactions significantly inhibit the generation of activated PC and TAFIa/CPB2 by the thrombin/thrombomodulin complex. Interacts with PF4; this interaction enhances generation of activated protein C. Interacts with HMGB1; this interaction inhibits HMGB1 inflammatory activity. As to expression, endothelial cells are unique in synthesizing thrombomodulin.

It localises to the membrane. Functionally, endothelial cell receptor that plays a critical role in regulating several physiological processes including hemostasis, coagulation, fibrinolysis, inflammation, and angiogenesis. Acts as a cofactor for thrombin activation of protein C/PROC on the surface of vascular endothelial cells leading to initiation of the activated protein C anticoagulant pathway. Also accelerates the activation of the plasma carboxypeptidase B2/CPB2, which catalyzes removal of C-terminal basic amino acids from its substrates including kinins or anaphylatoxins leading to fibrinolysis inhibition. Plays critical protective roles in changing the cleavage specificity of protease-activated receptor 1/PAR1, inhibiting endothelial cell permeability and inflammation. Suppresses inflammation distinctly from its anticoagulant cofactor activity by sequestering HMGB1 thereby preventing it from engaging cellular receptors such as RAGE and contributing to the inflammatory response. The chain is Thrombomodulin (THBD) from Bos taurus (Bovine).